We begin with the raw amino-acid sequence, 103 residues long: Small ribosomal subunit protein uS10 (103 aa).

Belongs to the universal ribosomal protein uS10 family. In terms of assembly, part of the 30S ribosomal subunit.

Involved in the binding of tRNA to the ribosomes. This Nitratiruptor sp. (strain SB155-2) protein is Small ribosomal subunit protein uS10.